The primary structure comprises 467 residues: tRNA-2-methylthio-N(6)-dimethylallyladenosine synthase (467 aa).

Residues 1–20 are disordered; that stretch reads MSDDTTQIEPAMAQETSPRA. One can recognise an MTTase N-terminal domain in the interval 23–143; that stretch reads RKVFVKTYGC…LPNALARVRG (121 aa). Cys32, Cys68, Cys106, Cys184, Cys188, and Cys191 together coordinate [4Fe-4S] cluster. Residues 170–402 enclose the Radical SAM core domain; that stretch reads RKRGVSAFLT…QALLSAQQYA (233 aa). In terms of domain architecture, TRAM spans 405 to 467; that stretch reads DSMIGRKMDV…TNSLIAQKLA (63 aa).

This sequence belongs to the methylthiotransferase family. MiaB subfamily. Monomer. It depends on [4Fe-4S] cluster as a cofactor.

The protein resides in the cytoplasm. It catalyses the reaction N(6)-dimethylallyladenosine(37) in tRNA + (sulfur carrier)-SH + AH2 + 2 S-adenosyl-L-methionine = 2-methylsulfanyl-N(6)-dimethylallyladenosine(37) in tRNA + (sulfur carrier)-H + 5'-deoxyadenosine + L-methionine + A + S-adenosyl-L-homocysteine + 2 H(+). Catalyzes the methylthiolation of N6-(dimethylallyl)adenosine (i(6)A), leading to the formation of 2-methylthio-N6-(dimethylallyl)adenosine (ms(2)i(6)A) at position 37 in tRNAs that read codons beginning with uridine. This Brucella abortus (strain S19) protein is tRNA-2-methylthio-N(6)-dimethylallyladenosine synthase.